We begin with the raw amino-acid sequence, 584 residues long: Ubiquitin-like-specific protease 1D (584 aa).

Disordered stretches follow at residues 28-64 (DKED…PKLL) and 99-323 (DLEE…QAAE). A compositionally biased stretch (basic and acidic residues) spans 99–120 (DLEEEKQRRVLEGSKMEVDRSS). Over residues 121–132 (KVVSSTSSGSDV) the composition is skewed to low complexity. 2 stretches are compositionally biased toward basic and acidic residues: residues 142–165 (DTSR…KEVS) and 176–196 (PKTD…LGCE). The segment covering 197–207 (RRKHKAGRKPV) has biased composition (basic residues). Basic and acidic residues predominate over residues 221–253 (GKAEHSAKQFDSGLKESKGNKKSKEPYGKKRPM). Residues 261–274 (IDDDDDDDDDDDND) show a composition bias toward acidic residues. Residues 275 to 286 (TSGHETPREWSW) show a composition bias toward basic and acidic residues. Residues His-438, Asp-461, and Cys-525 contribute to the active site.

This sequence belongs to the peptidase C48 family.

The protein resides in the nucleus speckle. Its function is as follows. Protease that catalyzes two essential functions in the SUMO pathway: processing of full-length SUMOs to their mature forms and deconjugation of SUMO from targeted proteins. Cleaves precursors of SUM1 and SUM2, but not of SUM3 or SUM5. Able to release SUM1 and SUM2 from conjugates, but unable to cleave SUM3. Protease activity mainly directed at deconjugating SUM1 and SUM2 from their target proteins. Regulates salt stress responses and flowering time. Redundant with ULP1C. The protein is Ubiquitin-like-specific protease 1D (ULP1D) of Arabidopsis thaliana (Mouse-ear cress).